Reading from the N-terminus, the 585-residue chain is MAGUK p55 subfamily member 3 (585 aa).

L27 domains follow at residues 6–60 (EDSG…ERQS) and 61–118 (PTPV…FDPV). The PDZ domain occupies 137 to 218 (IVRLVKNKEP…SITLKIIPAT (82 aa)). In terms of domain architecture, SH3 spans 226-296 (ESKVFMRALF…PSKQFQERRL (71 aa)). S307 carries the phosphoserine modification. The Guanylate kinase-like domain maps to 385–570 (SRLVVLIGSL…VCSQLRAVIE (186 aa)). Residues 510–530 (KRKTPPVSPDSEDPATPLDEQ) form a disordered region.

The protein belongs to the MAGUK family. Interacts with HTR2C; this interaction stabilizes the receptor at the plasma membrane and prevents the desensitization of the HTR2C receptor-mediated calcium response. Interacts with HTR2A. Interacts with HTR4. Interacts (via PDZ domain) with CADM1 (via C-terminus)Interacts (via PDZ domain) with CADM1; this interaction connects CADM1 with DLG1. Interacts (via Guanylate kinase-like domain) with PALS1. Interacts with DLG1 (via N-terminus); this interaction connects CADM1 with DLG1 and links CADM1 with the regulatory subunit of phosphoinositide-3-kinase (PI3K) by forming a multiprotein complex and participates in cell spreading.

The protein resides in the apical cell membrane. It is found in the cell membrane. It localises to the cell junction. Its subcellular location is the adherens junction. In terms of biological role, participates in cell spreading through the phosphoinositide-3-kinase (PI3K) pathway by connecting CADM1 to DLG1 and the regulatory subunit of phosphoinositide-3-kinase (PI3K). Stabilizes HTR2C at the plasma membrane and prevents its desensitization. May participates in the maintenance of adherens junctions. The sequence is that of MAGUK p55 subfamily member 3 from Rattus norvegicus (Rat).